The sequence spans 90 residues: uncharacterized protein (90 aa).

This is an uncharacterized protein from Treponema pallidum (strain Nichols).